A 394-amino-acid chain; its full sequence is Chalcone synthase 2 (394 aa).

Cys167 is a catalytic residue.

It belongs to the thiolase-like superfamily. Chalcone/stilbene synthases family.

The enzyme catalyses (E)-4-coumaroyl-CoA + 3 malonyl-CoA + 3 H(+) = 2',4,4',6'-tetrahydroxychalcone + 3 CO2 + 4 CoA. Its pathway is secondary metabolite biosynthesis; flavonoid biosynthesis. In terms of biological role, the primary product of this enzyme is 4,2',4',6'-tetrahydroxychalcone (also termed naringenin-chalcone or chalcone) which can under specific conditions spontaneously isomerize into naringenin. The protein is Chalcone synthase 2 (CHS2) of Secale cereale (Rye).